The sequence spans 341 residues: MEPAFGEVNQLGGVFVNGRPLPNAIRLRIVELAQLGIRPCDISRQLRVSHGCVSKILARYNETGSILPGAIGGSKPRVTTPTVVKHIRTYKQRDPGIFAWEIRDRLLADGVCDKYNVPSVSSISRILRNKIGNLTQQGHYDSYKQHQPAPQPALPYNHIYSYPSPITAAAAKVPTPPGVPAIPGSVAMPRTWPSSHSVTDILGIRSITDQVSDSSPYHSPKVEEWSSLGRNNFPAAAPHAVNGLEKGALEQETKYSQAPNGLPAVGSFVSASSMAPYPTPAQVSPYMTYSAAPSGYVGGHGWQHAGSTPLSPHNCDIPASLAFKGMQAAREGSHSVTASAL.

Residues 4 to 130 (AFGEVNQLGG…SSISRILRNK (127 aa)) constitute a DNA-binding region (paired). Residues 7–63 (EVNQLGGVFVNGRPLPNAIRLRIVELAQLGIRPCDISRQLRVSHGCVSKILARYNET) form a PAI subdomain region. Residues 82–130 (TVVKHIRTYKQRDPGIFAWEIRDRLLADGVCDKYNVPSVSSISRILRNK) are RED subdomain. The segment at 168–189 (AAAAKVPTPPGVPAIPGSVAMP) is interaction with KDM5B.

Interacts with KDM5B.

Its subcellular location is the nucleus. In terms of biological role, transcription factor required for normal development of thymus, parathyroid glands, ultimobranchial bodies, teeth, skeletal elements of skull and larynx as well as distal limbs. This is Paired box protein Pax-9 (PAX9) from Callithrix jacchus (White-tufted-ear marmoset).